The sequence spans 73 residues: Large ribosomal subunit protein bL31 (73 aa).

The Zn(2+) site is built by C16, C18, C37, and C40.

Belongs to the bacterial ribosomal protein bL31 family. Type A subfamily. In terms of assembly, part of the 50S ribosomal subunit. Zn(2+) serves as cofactor.

Functionally, binds the 23S rRNA. The polypeptide is Large ribosomal subunit protein bL31 (Hamiltonella defensa subsp. Acyrthosiphon pisum (strain 5AT)).